Consider the following 586-residue polypeptide: Putative Lon protease homolog (586 aa).

In terms of domain architecture, Lon proteolytic spans 346 to 543; the sequence is GERIGQINAL…TDALPLLLNL (198 aa). Active-site residues include Ser-438 and Lys-481.

The protein belongs to the peptidase S16 family.

The protein is Putative Lon protease homolog (ycbZ) of Escherichia coli (strain K12).